Reading from the N-terminus, the 25-residue chain is Kunitz-type serine protease inhibitor RsTIS5 (25 aa).

Residues 1 to 25 (EAEPKPFNPVCYEPKEVGPCKAYVP) enclose the BPTI/Kunitz inhibitor domain.

Its function is as follows. Serine protease inhibitor. Inhibits trypsin, elastase and plasmin. Does not inhibit kallikrein. The polypeptide is Kunitz-type serine protease inhibitor RsTIS5 (Rhipicephalus sanguineus (Brown dog tick)).